A 1012-amino-acid chain; its full sequence is Vacuolar membrane protease (1012 aa).

At 1–60 (MRRSTDPRNLLVRRGPLLVDGESAISELDPGFFPTGDAPKMSSTTRRRFNLIAFTPGPVT) the chain is on the cytoplasmic side. Residues 61 to 81 (VISSLVYLALLIPLLLVHTIV) traverse the membrane as a helical segment. Residues 82-432 (PSAPKSNPKG…SFAVFRLHTL (351 aa)) lie on the Vacuolar side of the membrane. The N-linked (GlcNAc...) asparagine glycan is linked to Asn-159. The Zn(2+) site is built by His-215 and Asp-227. Glu-261 acts as the Proton acceptor in catalysis. The Zn(2+) site is built by Glu-262, Glu-287, and His-360. A helical transmembrane segment spans residues 433 to 453 (FAISVTLLVVCPIVLFVIGII). The Cytoplasmic portion of the chain corresponds to 454 to 487 (LSKMDKMYLFSIHETIPETKEKVSVRGLRGLFRY). A helical transmembrane segment spans residues 488–508 (PIILVVSSGILIGLSYLLAKV). Over 509–518 (NPFIVHSSSY) the chain is Vacuolar. A helical transmembrane segment spans residues 519 to 539 (AVWSMMLSSWIFMTWFLSCIA). Over 540-550 (DFFRPSALHRA) the chain is Cytoplasmic. Residues 551–571 (YTFTWQLLVMWVLLVISTVYV) form a helical membrane-spanning segment. The Vacuolar segment spans residues 572-575 (NQHD). The chain crosses the membrane as a helical span at residues 576–596 (IAAGYFIVFYFAGTFLATLIS). Residues 597–710 (YLELFALPNK…WSASLPTWTW (114 aa)) lie on the Cytoplasmic side of the membrane. Over residues 614–629 (SQYPSRLGSNRSSRIL) the composition is skewed to polar residues. Positions 614–660 (SQYPSRLGSNRSSRILSPSADELPTGGDNNGEIYDGEEEPTESSSLL) are disordered. A helical transmembrane segment spans residues 711 to 731 (VLQFLFVGPVVIMFIGQLGLF). Residues 732–743 (LTSAMNQVGADG) lie on the Vacuolar side of the membrane. A helical membrane pass occupies residues 744 to 764 (VGLLVVYIAIAVFSVLLLIPL). Residues 765–777 (SPFIHRFTYHVPT) are Cytoplasmic-facing. A helical transmembrane segment spans residues 778–798 (FLLLVFIATLIYNLAAFPFSA). Residues 799–1012 (ENRLKIFFVQ…DGLVEVSRGF (214 aa)) lie on the Vacuolar side of the membrane. N-linked (GlcNAc...) asparagine glycans are attached at residues Asn-842 and Asn-878.

This sequence belongs to the peptidase M28 family. Zn(2+) serves as cofactor.

It localises to the vacuole membrane. Its function is as follows. May be involved in vacuolar sorting and osmoregulation. This chain is Vacuolar membrane protease, found in Coccidioides posadasii (strain RMSCC 757 / Silveira) (Valley fever fungus).